Here is a 195-residue protein sequence, read N- to C-terminus: FMN-dependent NADH:quinone oxidoreductase 2 (195 aa).

Residues 16-18 (SVS) and 85-88 (MWNL) each bind FMN.

Belongs to the azoreductase type 1 family. Homodimer. Requires FMN as cofactor.

It carries out the reaction 2 a quinone + NADH + H(+) = 2 a 1,4-benzosemiquinone + NAD(+). The enzyme catalyses N,N-dimethyl-1,4-phenylenediamine + anthranilate + 2 NAD(+) = 2-(4-dimethylaminophenyl)diazenylbenzoate + 2 NADH + 2 H(+). Functionally, quinone reductase that provides resistance to thiol-specific stress caused by electrophilic quinones. Its function is as follows. Also exhibits azoreductase activity. Catalyzes the reductive cleavage of the azo bond in aromatic azo compounds to the corresponding amines. This Photobacterium profundum (strain SS9) protein is FMN-dependent NADH:quinone oxidoreductase 2.